We begin with the raw amino-acid sequence, 293 residues long: Ribosomal protein L11 methyltransferase (293 aa).

T145, G166, D188, and N230 together coordinate S-adenosyl-L-methionine.

Belongs to the methyltransferase superfamily. PrmA family.

It localises to the cytoplasm. It catalyses the reaction L-lysyl-[protein] + 3 S-adenosyl-L-methionine = N(6),N(6),N(6)-trimethyl-L-lysyl-[protein] + 3 S-adenosyl-L-homocysteine + 3 H(+). Methylates ribosomal protein L11. In Enterobacter sp. (strain 638), this protein is Ribosomal protein L11 methyltransferase.